A 116-amino-acid chain; its full sequence is Spexin (116 aa).

A signal peptide spans 1–26; it reads MKGLRSLAATTLALFLVFVFLGNSSC. Residues 27–35 constitute a propeptide that is removed on maturation; it reads APQRLLERR. Residue Q49 is modified to Glutamine amide. Propeptides lie at residues 50 to 116 and 74 to 116; these read GRRF…LLNW and PNPQ…LLNW. Over residues 55–73 the composition is skewed to basic and acidic residues; it reads SDQSRRKDLSDRPLPERRS. Positions 55-77 are disordered; the sequence is SDQSRRKDLSDRPLPERRSPNPQ.

Belongs to the spexin family. Expressed in the type I glomic cells within the carotid body (at protein level). Expressed predominantly in pancreas, testis, kidney, brain and placenta. Expressed in submucosal layer of esophagus and stomach fundus.

It is found in the secreted. The protein localises to the extracellular space. Its subcellular location is the cytoplasmic vesicle. It localises to the secretory vesicle. In terms of biological role, plays a role as a central modulator of cardiovascular and renal function and nociception. Also plays a role in energy metabolism and storage. Inhibits adrenocortical cell proliferation with minor stimulation on corticosteroid release. Acts as a ligand for galanin receptors GALR2 and GALR3. Intracerebroventricular administration of the peptide induces an increase in arterial blood pressure, a decrease in both heart rate and renal excretion and delayed natriuresis. Intraventricular administration of the peptide induces antinociceptive activity. Also induces contraction of muscarinic-like stomach smooth muscles. Intraperitoneal administration of the peptide induces a reduction in food consumption and body weight. Inhibits long chain fatty acid uptake into adipocytes. Its function is as follows. Intracerebroventricular administration of the peptide induces a decrease in heart rate, but no change in arterial pressure, and an increase in urine flow rate. Intraventricular administration of the peptide induces antinociceptive activity. In Homo sapiens (Human), this protein is Spexin (SPX).